A 116-amino-acid chain; its full sequence is Hydrogenase maturation factor HypA (116 aa).

Residue His2 participates in Ni(2+) binding. Cys73, Cys76, Cys90, and Cys93 together coordinate Zn(2+).

This sequence belongs to the HypA/HybF family.

Involved in the maturation of [NiFe] hydrogenases. Required for nickel insertion into the metal center of the hydrogenase. In Escherichia coli O6:H1 (strain CFT073 / ATCC 700928 / UPEC), this protein is Hydrogenase maturation factor HypA.